A 508-amino-acid chain; its full sequence is MASPAPAPPAASSSAAGSAPPPRIGLAGLATMGQNLALNIAEKGFPISVYNRTAAKVDATVSRAEAEGALPVLGHRDPRGFVLSLSRPRTVVLLVQAGRAVDATIDALVPYLDAGDAIVDGGNEWYQNTERRIEEAAARGILYLGMGVSGGEEGARNGPSLMPGGHIDAYNNIRDILEKAAAQTEDGACVTFVGPGGAGNFVKMVHNGIEYGDMQLIAEAYDVLRRVGGLSNSEIADVFAEWNRGELESFLVEITADIFTVADPLDGSGGGGLVDKILDKTGMKGTGKWTVQQAAELAIAAPTIAASLDGRYLSGLKDERVAAAGVLEAEGMPSGLLETINVDKKMLVDRVRQALYASKICSYAQGMNLLRAKSVEKGWNLNLAELARIWKGGCIIRAKFLDRIKKAYDRNPELANLIVDREFAREMVQRQNAWRWVVARAVEAGISTPGMSASLSYFDTYRCSRLPANLIQAQRDLFGAHTYERIDRPGSFHTEWTKLARKSNGAAI.

The N-terminal 12 residues, 1–12, are a transit peptide targeting the chloroplast; the sequence is MASPAPAPPAAS. Residues 28 to 33, 51 to 53, 95 to 97, and Asn-123 contribute to the NADP(+) site; these read GLATMG, NRT, and VQA. Substrate is bound by residues Asn-123 and 149 to 151; that span reads SGG. Lys-203 functions as the Proton acceptor in the catalytic mechanism. Substrate is bound at residue 206-207; that stretch reads HN. The active-site Proton donor is the Glu-210. Residues Tyr-211, Lys-284, Arg-311, Arg-475, and His-481 each coordinate substrate.

This sequence belongs to the 6-phosphogluconate dehydrogenase family. In terms of assembly, homodimer.

It is found in the plastid. Its subcellular location is the chloroplast. The catalysed reaction is 6-phospho-D-gluconate + NADP(+) = D-ribulose 5-phosphate + CO2 + NADPH. It participates in carbohydrate degradation; pentose phosphate pathway; D-ribulose 5-phosphate from D-glucose 6-phosphate (oxidative stage): step 3/3. Functionally, catalyzes the oxidative decarboxylation of 6-phosphogluconate to ribulose 5-phosphate and CO(2), with concomitant reduction of NADP to NADPH. This Oryza sativa subsp. japonica (Rice) protein is 6-phosphogluconate dehydrogenase, decarboxylating 2, chloroplastic (G6PGH2).